We begin with the raw amino-acid sequence, 139 residues long: Small ribosomal subunit protein bS16 (139 aa).

The segment at K84–A139 is disordered.

The protein belongs to the bacterial ribosomal protein bS16 family.

The protein is Small ribosomal subunit protein bS16 of Streptomyces coelicolor (strain ATCC BAA-471 / A3(2) / M145).